We begin with the raw amino-acid sequence, 626 residues long: DNA mismatch repair protein MutL (626 aa).

This sequence belongs to the DNA mismatch repair MutL/HexB family.

Its function is as follows. This protein is involved in the repair of mismatches in DNA. It is required for dam-dependent methyl-directed DNA mismatch repair. May act as a 'molecular matchmaker', a protein that promotes the formation of a stable complex between two or more DNA-binding proteins in an ATP-dependent manner without itself being part of a final effector complex. The protein is DNA mismatch repair protein MutL of Chlorobium luteolum (strain DSM 273 / BCRC 81028 / 2530) (Pelodictyon luteolum).